The sequence spans 177 residues: O-acetyl-ADP-ribose deacetylase (177 aa).

Residues 1–175 (MKTRIHVVQG…LYERLLTQQG (175 aa)) enclose the Macro domain. Residues 11–12 (DI), Asn25, 33–35 (GVD), and 122–126 (STGVY) contribute to the substrate site. The active-site Proton acceptor is Asp35.

Belongs to the MacroD-type family. YmdB subfamily. In terms of assembly, homodimer. Interacts with RNase III.

It carries out the reaction 3''-O-acetyl-ADP-D-ribose + H2O = ADP-D-ribose + acetate + H(+). It catalyses the reaction 2''-O-acetyl-ADP-D-ribose + H2O = ADP-D-ribose + acetate + H(+). Functionally, deacetylates O-acetyl-ADP ribose to yield ADP-ribose and free acetate. Down-regulates ribonuclease 3 (RNase III) activity. Acts by interacting directly with the region of the ribonuclease that is required for dimerization/activation. This Shigella dysenteriae serotype 1 (strain Sd197) protein is O-acetyl-ADP-ribose deacetylase.